A 305-amino-acid chain; its full sequence is Putative lipid kinase SAB0675c (305 aa).

One can recognise a DAGKc domain in the interval Asn-3–Tyr-139. ATP is bound by residues Ser-44, Gly-74–Glu-80, and Thr-101. Residues Ser-220, Asp-223, and Glu-225 each coordinate Mg(2+). Glu-281 (proton acceptor) is an active-site residue.

The protein belongs to the diacylglycerol/lipid kinase family. Requires Mg(2+) as cofactor.

In terms of biological role, may catalyze the ATP-dependent phosphorylation of lipids other than diacylglycerol (DAG). The sequence is that of Putative lipid kinase SAB0675c from Staphylococcus aureus (strain bovine RF122 / ET3-1).